A 261-amino-acid chain; its full sequence is MFNIEKLQSLAKYRWVIVIILALLFSALSVSIFHLPFLMTALVLSIVGLIFAYHKSVWLVLFILSNLPMLATTIFAYQHHFTTLDTVIFFIIFLLTIISSYLIARKADIIPKISWKYFPPLKIIIGFALLFLVSILTGIFAQIINQSPTTSNQDSLNELQKVIPIAVFATQTLAAGFLEELVYRVGIFEVIFKNQKYFAFLTALLLFAYMHGPTDLYSWLTYGLMSLVLTSLYAKYRNFYLNMSVHLLWNLFGLVIALVLK.

6 helical membrane passes run 15–35 (WVIVIILALLFSALSVSIFHL), 43–63 (VLSIVGLIFAYHKSVWLVLFI), 84–104 (LDTVIFFIIFLLTIISSYLIA), 123–143 (IIIGFALLFLVSILTGIFAQI), 197–217 (YFAFLTALLLFAYMHGPTDLY), and 239–259 (FYLNMSVHLLWNLFGLVIALV).

The protein belongs to the UPF0177 family.

It is found in the cell membrane. This chain is UPF0177 protein YvdC (yvdC), found in Lactococcus lactis subsp. lactis (strain IL1403) (Streptococcus lactis).